Here is a 100-residue protein sequence, read N- to C-terminus: UPF0213 protein YhbQ (100 aa).

Positions Thr2–Arg77 constitute a GIY-YIG domain.

Belongs to the UPF0213 family.

The chain is UPF0213 protein YhbQ from Escherichia coli O127:H6 (strain E2348/69 / EPEC).